Here is a 157-residue protein sequence, read N- to C-terminus: Ribonuclease H (157 aa).

The RNase H type-1 domain maps to 1–146 (MPELFAYTDG…ADALAREGMA (146 aa)). Mg(2+)-binding residues include Asp-9, Glu-52, Asp-74, and Asp-138.

It belongs to the RNase H family. In terms of assembly, monomer. Mg(2+) serves as cofactor.

Its subcellular location is the cytoplasm. It catalyses the reaction Endonucleolytic cleavage to 5'-phosphomonoester.. In terms of biological role, endonuclease that specifically degrades the RNA of RNA-DNA hybrids. This Dinoroseobacter shibae (strain DSM 16493 / NCIMB 14021 / DFL 12) protein is Ribonuclease H.